The primary structure comprises 286 residues: NADPH-dependent 7-cyano-7-deazaguanine reductase (286 aa).

Residue 92-94 (IES) participates in substrate binding. Residue 94 to 95 (SK) participates in NADPH binding. The active-site Thioimide intermediate is Cys194. Catalysis depends on Asp201, which acts as the Proton donor. 233-234 (HE) is a substrate binding site. Residue 262-263 (RG) participates in NADPH binding.

It belongs to the GTP cyclohydrolase I family. QueF type 2 subfamily. Homodimer.

The protein resides in the cytoplasm. The enzyme catalyses 7-aminomethyl-7-carbaguanine + 2 NADP(+) = 7-cyano-7-deazaguanine + 2 NADPH + 3 H(+). It functions in the pathway tRNA modification; tRNA-queuosine biosynthesis. Its function is as follows. Catalyzes the NADPH-dependent reduction of 7-cyano-7-deazaguanine (preQ0) to 7-aminomethyl-7-deazaguanine (preQ1). The chain is NADPH-dependent 7-cyano-7-deazaguanine reductase from Shewanella sp. (strain MR-4).